Reading from the N-terminus, the 635-residue chain is MASKPGPLTQWPWNNLGNYKYALVAPSAAYSTYRFVTASSAAERDLLNFMVFPMLLLRLLYGQLWITVSRHQTARSKHKIVNKSLDFEQIDRERNWDDQIILTALVFYLVSATMPQAQVAPWWSTKGMVVTAVLHAGPVEFLYYWLHRALHHHWLYARYHSHHHASIVTEPITSVIHPFAEEVVYFVLLAIPILSTVATGTVSVVTANGYLVYIDFMNYLGHCNFELVPKCLFHVFPPLKYLLYTPSFHSLHHTQFRTNYSLFMPVYDYIYGTTDKSSDELYERTLQGRDEAAWRPDVVHLTHLTAPESVFHNRLGFAAVASNPLGAAASGHLLRAASAVASPLLSLFASTFRSEANRLDKLNIETWVIPRFTSHYTSKSDGYKVSRLIEKAVSDAEASGARVLTLGLLNQGYDLNRNGELYVVRKPSLKTKIVDGTSLAVAAVLNMIPQGTKDVLLLGNANKISLVLTLSLCKREIQVRMVNKELYECLKQQLQPEMQEHLVLSRSYSSKVWLVGDGVTDEEQMKAQKGSHFVPYSQFPPNKARNDCVYHCTPALLVPESFENLHVCENWLPRRVMSAWRAAGIVHALEKWDGHECGGRVTGVQKAWSAALARGFRPYDDHHHPGITHDGRGGL.

The next 4 helical transmembrane spans lie at 46–66 (LLNF…QLWI), 100–120 (IILT…AQVA), 127–147 (GMVV…YWLH), and 183–203 (VVYF…GTVS). The Fatty acid hydroxylase domain occupies 139–273 (VEFLYYWLHR…MPVYDYIYGT (135 aa)).

This sequence belongs to the sterol desaturase family. Homodimer.

The protein resides in the endoplasmic reticulum membrane. The catalysed reaction is a long-chain fatty aldehyde + 2 NADPH + O2 + H(+) = a long-chain alkane + formate + 2 NADP(+) + H2O. Aldehyde decarbonylase involved in the conversion of aldehydes to alkanes. Core component of a very-long-chain alkane synthesis complex. This chain is Very-long-chain aldehyde decarbonylase GL1-6, found in Oryza sativa subsp. indica (Rice).